The chain runs to 642 residues: Threonine--tRNA ligase (642 aa).

Residues 1-63 form the TGS domain; that stretch reads MSTVTVTLPD…TADVELEIVT (63 aa). The catalytic stretch occupies residues 242–533; it reads DHRKIGQEMD…LTEHYNGKFP (292 aa). 3 residues coordinate Zn(2+): Cys-334, His-385, and His-510.

Belongs to the class-II aminoacyl-tRNA synthetase family. As to quaternary structure, homodimer. Zn(2+) serves as cofactor.

Its subcellular location is the cytoplasm. The catalysed reaction is tRNA(Thr) + L-threonine + ATP = L-threonyl-tRNA(Thr) + AMP + diphosphate + H(+). In terms of biological role, catalyzes the attachment of threonine to tRNA(Thr) in a two-step reaction: L-threonine is first activated by ATP to form Thr-AMP and then transferred to the acceptor end of tRNA(Thr). In Haloarcula marismortui (strain ATCC 43049 / DSM 3752 / JCM 8966 / VKM B-1809) (Halobacterium marismortui), this protein is Threonine--tRNA ligase.